Here is a 356-residue protein sequence, read N- to C-terminus: Tetraacyldisaccharide 4'-kinase (356 aa).

Residue 51 to 58 (GWGGSGKT) participates in ATP binding.

The protein belongs to the LpxK family.

It carries out the reaction a lipid A disaccharide + ATP = a lipid IVA + ADP + H(+). It functions in the pathway glycolipid biosynthesis; lipid IV(A) biosynthesis; lipid IV(A) from (3R)-3-hydroxytetradecanoyl-[acyl-carrier-protein] and UDP-N-acetyl-alpha-D-glucosamine: step 6/6. Its function is as follows. Transfers the gamma-phosphate of ATP to the 4'-position of a tetraacyldisaccharide 1-phosphate intermediate (termed DS-1-P) to form tetraacyldisaccharide 1,4'-bis-phosphate (lipid IVA). This is Tetraacyldisaccharide 4'-kinase from Oleidesulfovibrio alaskensis (strain ATCC BAA-1058 / DSM 17464 / G20) (Desulfovibrio alaskensis).